Reading from the N-terminus, the 249-residue chain is Chitooligosaccharide deacetylase (249 aa).

The Mg(2+) site is built by His-61 and His-125.

The protein belongs to the YdjC deacetylase family. ChbG subfamily. As to quaternary structure, homodimer. It depends on Mg(2+) as a cofactor.

Its subcellular location is the cytoplasm. It catalyses the reaction N,N'-diacetylchitobiose + H2O = N-acetyl-beta-D-glucosaminyl-(1-&gt;4)-D-glucosamine + acetate. It carries out the reaction diacetylchitobiose-6'-phosphate + H2O = N'-monoacetylchitobiose-6'-phosphate + acetate. It participates in glycan degradation; chitin degradation. Involved in the degradation of chitin. ChbG is essential for growth on the acetylated chitooligosaccharides chitobiose and chitotriose but is dispensable for growth on cellobiose and chitosan dimer, the deacetylated form of chitobiose. Deacetylation of chitobiose-6-P and chitotriose-6-P is necessary for both the activation of the chb promoter by the regulatory protein ChbR and the hydrolysis of phosphorylated beta-glucosides by the phospho-beta-glucosidase ChbF. Catalyzes the removal of only one acetyl group from chitobiose-6-P to yield monoacetylchitobiose-6-P, the inducer of ChbR and the substrate of ChbF. In Escherichia coli O9:H4 (strain HS), this protein is Chitooligosaccharide deacetylase.